The following is a 378-amino-acid chain: MATTHAQGHQPVLGNDTLREHYDYVGKLAGRLRDPPEGGTLITTILFLVTCSFIVLENLMVLIAIWKNNKFHNRMYFFIGNLALCDLLAGIAYKVNILMSGRKTFSLSPTVWFLREGSMFVALGASTCSLLAIAIERHLTMIKMRPYDANKKHRVFLLIGMCWLIAFSLGALPILGWNCLENFPDCSTILPLYSKKYIAFLISIFTAILVTIVILYARIYCLVKSSSRRVANHNSERSMALLRTVVIVVSVFIACWSPLFILFLIDVACRAKECSILFKSQWFIMLAVLNSAMNPVIYTLASKEMRRAFFRLVCGCLVKGKGTQASPMQPALDPSRSKSSSSNNSSHSPKVKEDLPRVATSSCIIDKNRSFQNGVLCK.

Residues 1–44 (MATTHAQGHQPVLGNDTLREHYDYVGKLAGRLRDPPEGGTLITT) are Extracellular-facing. Asn-15 is a glycosylation site (N-linked (GlcNAc...) asparagine). Residues 45–65 (ILFLVTCSFIVLENLMVLIAI) traverse the membrane as a helical segment. Over 66–74 (WKNNKFHNR) the chain is Cytoplasmic. A helical transmembrane segment spans residues 75–95 (MYFFIGNLALCDLLAGIAYKV). The Extracellular segment spans residues 96–115 (NILMSGRKTFSLSPTVWFLR). Residues 116-136 (EGSMFVALGASTCSLLAIAIE) traverse the membrane as a helical segment. The Cytoplasmic segment spans residues 137-154 (RHLTMIKMRPYDANKKHR). Residues 155–175 (VFLLIGMCWLIAFSLGALPIL) traverse the membrane as a helical segment. At 176-196 (GWNCLENFPDCSTILPLYSKK) the chain is on the extracellular side. Residues 197 to 217 (YIAFLISIFTAILVTIVILYA) traverse the membrane as a helical segment. Residues 218-244 (RIYCLVKSSSRRVANHNSERSMALLRT) are Cytoplasmic-facing. A helical membrane pass occupies residues 245 to 265 (VVIVVSVFIACWSPLFILFLI). Residues 266 to 281 (DVACRAKECSILFKSQ) are Extracellular-facing. A helical membrane pass occupies residues 282–302 (WFIMLAVLNSAMNPVIYTLAS). The Cytoplasmic portion of the chain corresponds to 303–378 (KEMRRAFFRL…RSFQNGVLCK (76 aa)). Residues 323–354 (TQASPMQPALDPSRSKSSSSNNSSHSPKVKED) form a disordered region. Ser-326 is subject to Phosphoserine. Over residues 337 to 348 (SKSSSSNNSSHS) the composition is skewed to low complexity.

The protein belongs to the G-protein coupled receptor 1 family. In terms of tissue distribution, most abundant in heart, lung, kidney and spleen; low but detectable in brain, thymus, muscle and testis; and nearly undetectable in liver, stomach, and intestine. Expressed in embryonic lung from embryonic day 14-18. Also abundantly detected in embryonic nasal cartilage, sphenoid bone, vena cava, Meckel's cartilage/incisor teeth, genital tubercle and bladder.

It is found in the cell membrane. Functionally, receptor for the lysosphingolipid sphingosine 1-phosphate (S1P). S1P is a bioactive lysophospholipid that elicits diverse physiological effect on most types of cells and tissues. The protein is Sphingosine 1-phosphate receptor 3 (S1pr3) of Mus musculus (Mouse).